A 449-amino-acid polypeptide reads, in one-letter code: Chromosomal replication initiator protein DnaA (449 aa).

Positions 1 to 72 (MENIHDLWER…SETIDDLTGV (72 aa)) are domain I, interacts with DnaA modulators. Residues 72–111 (VRLYPKFVIPTSQLDEPFVEQELKKPMKQPPAQNGEMPNN) are domain II. The tract at residues 112 to 328 (MLNDKYTFDT…GALIRVVAYS (217 aa)) is domain III, AAA+ region. Residues Gly-156, Gly-158, Lys-159, and Thr-160 each contribute to the ATP site. Positions 329 to 449 (SLINQDMNAD…IQDISDKLRS (121 aa)) are domain IV, binds dsDNA.

Belongs to the DnaA family. Oligomerizes as a right-handed, spiral filament on DNA at oriC.

The protein resides in the cytoplasm. Functionally, plays an essential role in the initiation and regulation of chromosomal replication. ATP-DnaA binds to the origin of replication (oriC) to initiate formation of the DNA replication initiation complex once per cell cycle. Binds the DnaA box (a 9 base pair repeat at the origin) and separates the double-stranded (ds)DNA. Forms a right-handed helical filament on oriC DNA; dsDNA binds to the exterior of the filament while single-stranded (ss)DNA is stabiized in the filament's interior. The ATP-DnaA-oriC complex binds and stabilizes one strand of the AT-rich DNA unwinding element (DUE), permitting loading of DNA polymerase. After initiation quickly degrades to an ADP-DnaA complex that is not apt for DNA replication. Binds acidic phospholipids. In Halalkalibacterium halodurans (strain ATCC BAA-125 / DSM 18197 / FERM 7344 / JCM 9153 / C-125) (Bacillus halodurans), this protein is Chromosomal replication initiator protein DnaA.